Here is an 89-residue protein sequence, read N- to C-terminus: Protein S100-A6 (89 aa).

EF-hand domains follow at residues 12–47 (LVAIFHKYSGKEGDKHTLSKKELKELIQKELTIGSK) and 48–83 (LQDAEIARLMDDLDRNKDQEVNFQEYVAFLGALALI). Residues threonine 28 and glutamate 33 each contribute to the Ca(2+) site. Lysine 40 carries the post-translational modification N6-acetyllysine. Phosphoserine is present on serine 46. N6-acetyllysine; alternate is present on lysine 47. Residue lysine 47 is modified to N6-succinyllysine; alternate. Positions 61, 63, 65, 67, and 72 each coordinate Ca(2+).

This sequence belongs to the S-100 family. Homodimer; head to tail assembly of 2 subunits. Interacts with CACYBP in a calcium-dependent manner. Interacts with ANXA2 and ANXA11 (via N-terminus). Interacts with SUGT1. Interacts with TP53; has higher affinity for TP53 that is phosphorylated on its N-terminal domain, and lower affinity for TP53 that is phosphorylated on its C-terminal domain. Interacts with tropomyosin. Interacts with FKBP4. Interacts with PPP5C (via TPR repeats); the interaction is calcium-dependent and modulates PPP5C activity. Interacts with TPPP; this interaction inhibits TPPP dimerization.

Its subcellular location is the nucleus envelope. It is found in the cytoplasm. It localises to the cell membrane. Its function is as follows. May function as calcium sensor and modulator, contributing to cellular calcium signaling. May function by interacting with other proteins, such as TPR-containing proteins, and indirectly play a role in many physiological processes such as the reorganization of the actin cytoskeleton and in cell motility. Binds 2 calcium ions. Calcium binding is cooperative. The chain is Protein S100-A6 (S100a6) from Mus musculus (Mouse).